A 605-amino-acid polypeptide reads, in one-letter code: Aspartate--tRNA(Asp/Asn) ligase (605 aa).

Glu-172 provides a ligand contact to L-aspartate. The interval 196-199 (QLFK) is aspartate. Arg-218 serves as a coordination point for L-aspartate. Residues 218–220 (RDE) and Gln-227 contribute to the ATP site. His-455 contributes to the L-aspartate binding site. Glu-489 lines the ATP pocket. Residue Arg-496 participates in L-aspartate binding. An ATP-binding site is contributed by 541 to 544 (GLDR).

Belongs to the class-II aminoacyl-tRNA synthetase family. Type 1 subfamily. Homodimer.

It localises to the cytoplasm. It catalyses the reaction tRNA(Asx) + L-aspartate + ATP = L-aspartyl-tRNA(Asx) + AMP + diphosphate. Aspartyl-tRNA synthetase with relaxed tRNA specificity since it is able to aspartylate not only its cognate tRNA(Asp) but also tRNA(Asn). Reaction proceeds in two steps: L-aspartate is first activated by ATP to form Asp-AMP and then transferred to the acceptor end of tRNA(Asp/Asn). The chain is Aspartate--tRNA(Asp/Asn) ligase from Ralstonia nicotianae (strain ATCC BAA-1114 / GMI1000) (Ralstonia solanacearum).